The primary structure comprises 662 residues: UPF0313 protein CPF_1407 (662 aa).

One can recognise a Radical SAM core domain in the interval 296–567; it reads AIEEVKFSIV…AMQRALLQFK (272 aa). Positions 310, 314, and 317 each coordinate [4Fe-4S] cluster. The tract at residues 596–662 is disordered; sequence IRDKNSFGKG…QRSSKGKKRR (67 aa). The segment covering 618-632 has biased composition (basic and acidic residues); the sequence is SRNENSGRRESEDKK. The span at 633–644 shows a compositional bias: basic residues; that stretch reads RSSHSKKQRGNK.

This sequence belongs to the UPF0313 family. [4Fe-4S] cluster serves as cofactor.

The polypeptide is UPF0313 protein CPF_1407 (Clostridium perfringens (strain ATCC 13124 / DSM 756 / JCM 1290 / NCIMB 6125 / NCTC 8237 / Type A)).